Reading from the N-terminus, the 1068-residue chain is Retinoblastoma-like protein 1 (1068 aa).

Residue Thr-332 is modified to Phosphothreonine; by CDK2. The residue at position 369 (Thr-369) is a Phosphothreonine; by CDK4. The residue at position 385 (Thr-385) is a Phosphothreonine; by CDK2. The interval 385-584 is domain A; the sequence is TPVASATQSV…WEALQVSANK (200 aa). Residues 385-949 are pocket; binds T and E1A; sequence TPVASATQSV…GRVKSFALKY (565 aa). Positions 585–780 are spacer; that stretch reads VPTCEEVIFP…AQEVHSTGIN (196 aa). Residue Ser-640 is modified to Phosphoserine; by CDK2 and CDK4. A phosphoserine mark is found at Ser-650 and Ser-749. Residue Ser-762 is modified to Phosphoserine; by CDK2. A domain B region spans residues 781–949; sequence RPKRTGSLAL…GRVKSFALKY (169 aa). 2 positions are modified to phosphoserine; by CDK2 and CDK4: Ser-964 and Ser-975. Ser-988 carries the phosphoserine; by CDK2 modification. Thr-997 bears the Phosphothreonine; by CDK2 mark. Ser-1009 bears the Phosphoserine; by CDK2 mark. Ser-1041 carries the post-translational modification Phosphoserine.

Belongs to the retinoblastoma protein (RB) family. As to quaternary structure, component of the DREAM complex (also named LINC complex) at least composed of E2F4, E2F5, LIN9, LIN37, LIN52, LIN54, MYBL1, MYBL2, RBL1, RBL2, RBBP4, TFDP1 and TFDP2. The complex exists in quiescent cells where it represses cell cycle-dependent genes. It dissociates in S phase when LIN9, LIN37, LIN52 and LIN54 form a subcomplex that binds to MYBL2. Interacts with AATF. Interacts with KDM5A. Interacts with KMT5B and KMT5C. Interacts with USP4. Interacts with RBBP9. (Microbial infection) Interacts with SV40 and JC virus large T antigens. Large T antigen, but not E1A, binds only to the unphosphorylated form. In terms of assembly, (Microbial infection) Interacts with JC virus small t antigen. Post-translationally, cell-cycle arrest properties are inactivated by phosphorylation on Thr-332, Ser-640, Ser-964 and Ser-975 by CDK4.

Its subcellular location is the nucleus. Functionally, key regulator of entry into cell division. Directly involved in heterochromatin formation by maintaining overall chromatin structure and, in particular, that of constitutive heterochromatin by stabilizing histone methylation. Recruits and targets histone methyltransferases KMT5B and KMT5C, leading to epigenetic transcriptional repression. Controls histone H4 'Lys-20' trimethylation. Probably acts as a transcription repressor by recruiting chromatin-modifying enzymes to promoters. Potent inhibitor of E2F-mediated trans-activation. May act as a tumor suppressor. The protein is Retinoblastoma-like protein 1 (RBL1) of Homo sapiens (Human).